The chain runs to 124 residues: Fluoride-specific ion channel FluC (124 aa).

A run of 4 helical transmembrane segments spans residues 3-23, 36-56, 66-86, and 100-120; these read YLLVFLGGGLGAMFRHFINTV, TFFINVSGSLVMGLIAGYFAF, LFLMTGILGGYTTFSAFSLDA, and LYVLGSVALAIAGLFAGLALI. Positions 74 and 77 each coordinate Na(+).

The protein belongs to the fluoride channel Fluc/FEX (TC 1.A.43) family.

The protein localises to the cell inner membrane. The enzyme catalyses fluoride(in) = fluoride(out). Its activity is regulated as follows. Na(+) is not transported, but it plays an essential structural role and its presence is essential for fluoride channel function. Fluoride-specific ion channel. Important for reducing fluoride concentration in the cell, thus reducing its toxicity. This is Fluoride-specific ion channel FluC from Rhodopseudomonas palustris (strain BisB5).